Consider the following 102-residue polypeptide: Iron-sulfur cluster assembly protein CyaY (102 aa).

It belongs to the frataxin family.

Functionally, involved in iron-sulfur (Fe-S) cluster assembly. May act as a regulator of Fe-S biogenesis. The sequence is that of Iron-sulfur cluster assembly protein CyaY from Histophilus somni (strain 129Pt) (Haemophilus somnus).